We begin with the raw amino-acid sequence, 263 residues long: Ribonuclease HII (263 aa).

The RNase H type-2 domain maps to 71–262 (QAIAGIDEVG…VKSMCCDSTN (192 aa)). The a divalent metal cation site is built by aspartate 77, glutamate 78, and aspartate 172.

Belongs to the RNase HII family. It depends on Mn(2+) as a cofactor. Mg(2+) is required as a cofactor.

It is found in the cytoplasm. The enzyme catalyses Endonucleolytic cleavage to 5'-phosphomonoester.. Functionally, endonuclease that specifically degrades the RNA of RNA-DNA hybrids. The chain is Ribonuclease HII from Streptococcus pyogenes serotype M12 (strain MGAS2096).